The chain runs to 378 residues: Putative glutamate--cysteine ligase 2 (378 aa).

The protein belongs to the glutamate--cysteine ligase type 2 family. YbdK subfamily.

It catalyses the reaction L-cysteine + L-glutamate + ATP = gamma-L-glutamyl-L-cysteine + ADP + phosphate + H(+). Functionally, ATP-dependent carboxylate-amine ligase which exhibits weak glutamate--cysteine ligase activity. This Jannaschia sp. (strain CCS1) protein is Putative glutamate--cysteine ligase 2.